Reading from the N-terminus, the 440-residue chain is Protein C-ets-1 (440 aa).

N6-acetyllysine; alternate occurs at positions 8 and 15. Glycyl lysine isopeptide (Lys-Gly) (interchain with G-Cter in SUMO2); alternate cross-links involve residues lysine 8 and lysine 15. A Glycyl lysine isopeptide (Lys-Gly) (interchain with G-Cter in SUMO); alternate cross-link involves residue lysine 15. Residue threonine 38 is modified to Phosphothreonine; by MAPK. The 86-residue stretch at 51 to 136 (ATFSGFTKEQ…EHLEILQKED (86 aa)) folds into the PNT domain. Positions 130–243 (EILQKEDVKP…DNMCLGRASR (114 aa)) are activation domain; required for transcription activation. A Glycyl lysine isopeptide (Lys-Gly) (interchain with G-Cter in SUMO2) cross-link involves residue lysine 138. Tyrosine 223 bears the Phosphotyrosine mark. A Glycyl lysine isopeptide (Lys-Gly) (interchain with G-Cter in SUMO) cross-link involves residue lysine 227. Residue serine 251 is modified to Phosphoserine; by CaMK2. Phosphoserine is present on serine 254. Threonine 265 bears the Phosphothreonine mark. Residues serine 267 and serine 270 each carry the phosphoserine modification. Residues serine 282 and serine 285 each carry the phosphoserine; by CaMK2 modification. Residues 304–312 (FKDYVRDRA) form a helix HI-1 region. Lysine 305 is subject to N6-acetyllysine. Residues 323–330 (AAALAGYT) are helix HI-2. A DNA-binding region (ETS) is located at residues 335 to 415 (IQLWQFLLEL…AGKRYVYRFV (81 aa)). The tract at residues 418 to 422 (LQSLL) is helix H4. Residues 426 to 432 (PEELHAM) form a helix H5 region.

It belongs to the ETS family. Binds DNA as a homodimer; homodimerization is required for transcription activation. Interacts with MAF and MAFB. Interacts with PAX5; the interaction alters DNA-binding properties. Interacts with DAXX. Interacts with UBE2I. Interacts with SP100; the interaction is direct and modulates ETS1 transcriptional activity. In terms of processing, phosphorylation at Ser-251, Ser-282 and Ser-285 by CaMK2/CaMKII in response to calcium signaling decreases affinity for DNA: an increasing number of phosphoserines causes DNA-binding to become progressively weaker. Sumoylated on Lys-15 and Lys-227, preferentially with SUMO2; which inhibits transcriptional activity. Post-translationally, ubiquitinated; which induces proteasomal degradation.

Its subcellular location is the nucleus. The protein resides in the cytoplasm. With respect to regulation, autoinhibited by a module composed of four alpha helices (HI-1, HI-2, H4, and H5) that flank the DNA-binding ETS domain, reducing the affinity for DNA. Phosphorylation by CaMK2/CaMKII in response to calcium signaling decreases affinity for DNA. Functionally, transcription factor. Directly controls the expression of cytokine and chemokine genes in a wide variety of different cellular contexts. May control the differentiation, survival and proliferation of lymphoid cells. May also regulate angiogenesis through regulation of expression of genes controlling endothelial cell migration and invasion. The sequence is that of Protein C-ets-1 (Ets1) from Mus musculus (Mouse).